We begin with the raw amino-acid sequence, 763 residues long: G protein-regulated inducer of neurite outgrowth 3 (763 aa).

3 disordered regions span residues 1–48, 65–111, and 192–268; these read MGTV…IGNV, QACV…APGL, and ENSQ…GATC. Over residues 27–44 the composition is skewed to polar residues; the sequence is ESQSVSPQPAQPDNNASG. The span at 93 to 104 shows a compositional bias: basic and acidic residues; the sequence is KTPDDFLLHGSK. A compositionally biased stretch (polar residues) spans 237-250; the sequence is ENKQPSATALNTTA. A phosphoserine mark is found at S323 and S359. Disordered regions lie at residues 420 to 452, 471 to 624, and 711 to 737; these read TSSQ…PDFQ, NQGL…PRRG, and VKTQ…GRQH. Over residues 437-450 the composition is skewed to polar residues; that stretch reads KEATSRQPEGTNPD. Composition is skewed to basic and acidic residues over residues 480–496 and 518–539; these read REPE…KAES and PTDK…KDHA. Over residues 593–609 the composition is skewed to low complexity; sequence SLSLPSDGTGDSSPGSG.

May be involved in neurite outgrowth. This is G protein-regulated inducer of neurite outgrowth 3 (Gprin3) from Mus musculus (Mouse).